Consider the following 1025-residue polypeptide: Multidrug resistance protein MdtC (1025 aa).

Transmembrane regions (helical) follow at residues 3–23, 333–353, 360–380, 387–407, 431–451, 469–489, 528–548, 853–873, 875–895, 897–917, 953–973, and 984–1004; these read FFALFIYRPVATILLSVAITL, EVEQTLIISVALVILVVFLFL, IIPAVSVPVSLIGTFAAMYLC, LSLMALTIATGFVVDDAIVVL, VGFTVLSMSLSLVAVFLPLLL, VAIGISLLVSLTLTPMMCGWM, LVGVVLLGTIALNIWLYISIP, VILIIAAIATVYIVLGILYES, VHPLTILSTLPSAGVGALLAL, LFNAPFSLIALIGIMLLIGIV, PIMMTTLAALFGALPLVLSGG, and ITIVGGLVMSQLLTLYTTPVV.

This sequence belongs to the resistance-nodulation-cell division (RND) (TC 2.A.6) family. MdtC subfamily. In terms of assembly, part of a tripartite efflux system composed of MdtA, MdtB and MdtC. MdtC forms a heteromultimer with MdtB.

The protein localises to the cell inner membrane. In terms of biological role, the MdtABC tripartite complex confers resistance against novobiocin and deoxycholate. The polypeptide is Multidrug resistance protein MdtC (Escherichia coli O9:H4 (strain HS)).